Here is a 219-residue protein sequence, read N- to C-terminus: ATP-dependent Clp protease proteolytic subunit 4 (219 aa).

S125 (nucleophile) is an active-site residue. H150 is a catalytic residue.

Belongs to the peptidase S14 family. As to quaternary structure, fourteen ClpP subunits assemble into 2 heptameric rings which stack back to back to give a disk-like structure with a central cavity, resembling the structure of eukaryotic proteasomes.

It is found in the cytoplasm. It carries out the reaction Hydrolysis of proteins to small peptides in the presence of ATP and magnesium. alpha-casein is the usual test substrate. In the absence of ATP, only oligopeptides shorter than five residues are hydrolyzed (such as succinyl-Leu-Tyr-|-NHMec, and Leu-Tyr-Leu-|-Tyr-Trp, in which cleavage of the -Tyr-|-Leu- and -Tyr-|-Trp bonds also occurs).. Cleaves peptides in various proteins in a process that requires ATP hydrolysis. Has a chymotrypsin-like activity. Plays a major role in the degradation of misfolded proteins. This chain is ATP-dependent Clp protease proteolytic subunit 4, found in Prochlorococcus marinus (strain MIT 9312).